A 1347-amino-acid chain; its full sequence is Probable serine/threonine-protein kinase DDB_G0288147 (1347 aa).

A Phorbol-ester/DAG-type zinc finger spans residues 12-67; sequence NHRFEPYTLKHLTICKRCEKEIIGVSNSAQICYSCKNIYHTRCCKEIETKKLELIC. Disordered regions lie at residues 262-316, 333-402, and 463-485; these read PFNE…LNES, SNNS…KSSK, and DNNN…NNNN. Polar residues predominate over residues 271–282; sequence DSTLSASTYNRR. Low complexity-rich tracts occupy residues 286–316, 333–342, and 350–361; these read KNKN…LNES, SNNSNNLAAL, and TTTTTTTTTTTT. Composition is skewed to basic residues over residues 366–382 and 389–402; these read NNHH…KSRK and NKKK…KSSK. Low complexity predominate over residues 464 to 485; that stretch reads NNNNNNNNNNNNNNNSNNNNNN. The 256-residue stretch at 599–854 folds into the Protein kinase domain; the sequence is VKINVEIYDS…EILKVFYSLL (256 aa). Residues 605 to 613 and K626 contribute to the ATP site; that span reads IYDSPLCTV. The active-site Proton acceptor is the D724. Disordered regions lie at residues 937 to 1241 and 1282 to 1310; these read SERK…IVNP and SSDS…IRSP. Acidic residues predominate over residues 976–986; sequence IIDDDDDDDDD. Composition is skewed to low complexity over residues 1004-1015 and 1024-1062; these read NINSENKNNNNV and SSNS…NNNN. 2 stretches are compositionally biased toward polar residues: residues 1063–1083 and 1118–1127; these read LRQN…NQLM and LSSSQTSEIG. Low complexity-rich tracts occupy residues 1128–1241 and 1282–1291; these read DNNT…IVNP and SSDSSNSLSD.

The protein belongs to the protein kinase superfamily. TKL Ser/Thr protein kinase family.

The enzyme catalyses L-seryl-[protein] + ATP = O-phospho-L-seryl-[protein] + ADP + H(+). The catalysed reaction is L-threonyl-[protein] + ATP = O-phospho-L-threonyl-[protein] + ADP + H(+). The protein is Probable serine/threonine-protein kinase DDB_G0288147 of Dictyostelium discoideum (Social amoeba).